A 604-amino-acid polypeptide reads, in one-letter code: MCGIVGYVGFRNATDVLLDGLRRLEYRGYDSAGIAVRTPEGLKVVKRSGKLSALAEAVGKTPLQGALGIGHTRWATHGAPTDPNAHPHTTEDGRIALIHNGIFENYLELKEALEARGHRFRSETDTEVLAHLLEETYRGDLLEALREALKAVRGAYAVVVAHEDHEEIVAARTVSPLVVGLGEGENFLASDVPALLPYTRRVLFLHDGDVVRLTREGVEITDLEGRPVQREAVEVDWTLEAAEKGGFPHYMLKEIYEQPWVLENTLGGRLREEEGTVELGLALDPREVDRVHVIACGTASYAGLYGKYLLETLARLPTEWDVASEYRYRDPVVDSRTLALAISQSGETIDTLEGLREAKRKGARSLGVINAKGSTLTREVEDVLYIHAGPEIGVASTKAYTAMLAAMALLAVWFGRGRGALALEEAQRLLREMRRLPRLVEEVLEKRPLVAHVAEKYHQARDFLFLGRHVQAPTAYEGALKLKEISYIHAEAYPAGEMKHGPIALIDEHLPVVVLATKGPLYEKTLSNIQEVRARGGKVIAIATEGDEEIPRLAQDVIYVPEVHPLLAPIVSVVPLQLLAYEIAVLLGRDVDQPRNLAKSVTVE.

Cys2 serves as the catalytic Nucleophile; for GATase activity. The Glutamine amidotransferase type-2 domain occupies 2-216; it reads CGIVGYVGFR…DGDVVRLTRE (215 aa). SIS domains lie at 281–420 and 453–594; these read LALD…GRGA and VAEK…VDQP. Residue Lys599 is the For Fru-6P isomerization activity of the active site.

In terms of assembly, homodimer.

Its subcellular location is the cytoplasm. It carries out the reaction D-fructose 6-phosphate + L-glutamine = D-glucosamine 6-phosphate + L-glutamate. Its function is as follows. Catalyzes the first step in hexosamine metabolism, converting fructose-6P into glucosamine-6P using glutamine as a nitrogen source. The polypeptide is Glutamine--fructose-6-phosphate aminotransferase [isomerizing] (Thermus thermophilus (strain ATCC 27634 / DSM 579 / HB8)).